Reading from the N-terminus, the 118-residue chain is Large ribosomal subunit protein bL17 (118 aa).

This sequence belongs to the bacterial ribosomal protein bL17 family. Part of the 50S ribosomal subunit. Contacts protein L32.

The sequence is that of Large ribosomal subunit protein bL17 from Campylobacter hominis (strain ATCC BAA-381 / DSM 21671 / CCUG 45161 / LMG 19568 / NCTC 13146 / CH001A).